A 389-amino-acid polypeptide reads, in one-letter code: Succinate--CoA ligase [ADP-forming] subunit beta (389 aa).

In terms of domain architecture, ATP-grasp spans 9 to 244 (KEILRKFGVA…LDEEDPAEVE (236 aa)). Residues lysine 46, 53–55 (GRG), glutamate 99, alanine 102, and glutamate 107 each bind ATP. The Mg(2+) site is built by asparagine 199 and aspartate 213. Substrate is bound by residues asparagine 264 and 321-323 (GIM).

Belongs to the succinate/malate CoA ligase beta subunit family. As to quaternary structure, heterotetramer of two alpha and two beta subunits. Mg(2+) serves as cofactor.

It carries out the reaction succinate + ATP + CoA = succinyl-CoA + ADP + phosphate. The enzyme catalyses GTP + succinate + CoA = succinyl-CoA + GDP + phosphate. Its pathway is carbohydrate metabolism; tricarboxylic acid cycle; succinate from succinyl-CoA (ligase route): step 1/1. In terms of biological role, succinyl-CoA synthetase functions in the citric acid cycle (TCA), coupling the hydrolysis of succinyl-CoA to the synthesis of either ATP or GTP and thus represents the only step of substrate-level phosphorylation in the TCA. The beta subunit provides nucleotide specificity of the enzyme and binds the substrate succinate, while the binding sites for coenzyme A and phosphate are found in the alpha subunit. The sequence is that of Succinate--CoA ligase [ADP-forming] subunit beta from Paraburkholderia xenovorans (strain LB400).